Reading from the N-terminus, the 177-residue chain is F(420)H(2) dehydrogenase subunit I (177 aa).

The disordered stretch occupies residues 1-21 (MGCPEVQDRPGSGYELEETPA). 4Fe-4S ferredoxin-type domains are found at residues 76 to 105 (GLQT…IVKA) and 116 to 145 (WFPQ…SGKE). Residues C85, C88, C91, C95, C125, C128, C131, and C135 each contribute to the [4Fe-4S] cluster site.

Belongs to the complex I 23 kDa subunit family. In terms of assembly, the FPO complex is composed of at least 13 different subunits. The cofactor is [4Fe-4S] cluster.

It carries out the reaction methanophenazine + reduced coenzyme F420-(gamma-L-Glu)(n) = dihydromethanophenazine + oxidized coenzyme F420-(gamma-L-Glu)(n) + H(+). Its function is as follows. Component of the F(420)H(2) dehydrogenase (FPO complex) which is part of the energy-conserving F(420)H(2):heterodisulfide oxidoreductase system. The membrane-bound electron transfer system of the complex plays an important role in the metabolism of methylotrophic methanogens when the organisms grow on methanol or methylamines. Catalyzes the oxidation of methanophenazine to dihydromethanophenazine. It shuttles electrons from F(420)H(2), via FAD and iron-sulfur (Fe-S) centers, to methanophenazine (an electron carrier in the membrane). It couples the redox reaction to proton translocation (for every two electrons transferred, two hydrogen ions are translocated across the cytoplasmic membrane), and thus conserves the redox energy in a proton gradient. It also catalyzes the oxidation of F(420)H(2) with quinones such as 2,3-dimethyl-1,4-naphthoquinone, 2-methyl-1,4-naphthoquinone and tetramethyl-p-benzoquinone. This is F(420)H(2) dehydrogenase subunit I (fpoI) from Methanosarcina mazei (strain ATCC BAA-159 / DSM 3647 / Goe1 / Go1 / JCM 11833 / OCM 88) (Methanosarcina frisia).